The chain runs to 640 residues: MTEQTATQNYSFQAEVAQLLHLVTHSLYSNPEIFLRELISNASDACDKLRFEGINHPEYYEDDANLRVRVSLDKENKTITISDNGIGLSQQEAIDNLGTIAKSGTKDFMSKLTGDQKSDAQLIGQFGVGFYSGFIVADKITVESRRAGLPANDGVRWISGGTGDFEVQQITKDSRGTSIILHLRDDALDYLDAWKVKQIINKYSDHISLPIEMQKEVWQEEEVAEGEEPKGGQYVKTDEWEVINSASALWTRSKNEISEEQYIEFYKNLTHDFDAPLAWSHNRVEGNTEYTQLLYIPAKASSDIFTREAKAGIKLYVKRVFIMDDADNLIPNYLRFVKGVIDSADLPLNVSRELLQESRDVKTIREGNTRRVLTLLDGLAKSEDEKDQEKFKTFYQEFGSVLKEGLGEDFTNRERILKLLRYATSNQDEISTSFADYKARMKEGQKAIYYVSADSLAAAKNSPQLELFKKKGIEVLLMSERVDEWAMNFVHEFDGTPLQNVSKGAVDLGDLQDAEEKKALEQAAEQFKPVVDKLTDALKDKTKEVRVTTRLVDSPACLVTSDGELSPQLIRMLKQAGQAVPESKPILEINPEHPLVQKLEGSAQFDDLANVIFDQAVIAEGGLPEDPAAYVKRINSLLLK.

The tract at residues 1–352 is a; substrate-binding; it reads MTEQTATQNY…SADLPLNVSR (352 aa). The tract at residues 353 to 571 is b; that stretch reads ELLQESRDVK…DGELSPQLIR (219 aa). A c region spans residues 572-640; that stretch reads MLKQAGQAVP…VKRINSLLLK (69 aa).

Belongs to the heat shock protein 90 family. Homodimer.

The protein resides in the cytoplasm. In terms of biological role, molecular chaperone. Has ATPase activity. This Acinetobacter baylyi (strain ATCC 33305 / BD413 / ADP1) protein is Chaperone protein HtpG.